Here is a 210-residue protein sequence, read N- to C-terminus: Oligoribonuclease (210 aa).

The Exonuclease domain occupies 12–177; the sequence is LVWIDLEMTG…ADIVESIREL (166 aa). The active site involves tyrosine 134.

Belongs to the oligoribonuclease family.

The protein localises to the cytoplasm. Functionally, 3'-to-5' exoribonuclease specific for small oligoribonucleotides. The polypeptide is Oligoribonuclease (Corynebacterium diphtheriae (strain ATCC 700971 / NCTC 13129 / Biotype gravis)).